Consider the following 926-residue polypeptide: Beta-mannosidase A (926 aa).

The N-terminal stretch at 1 to 21 is a signal peptide; the sequence is MHVKAETVLALLTPAPPSVVG. N-linked (GlcNAc...) asparagine glycans are attached at residues asparagine 40, asparagine 242, asparagine 277, asparagine 311, and asparagine 342. Glutamate 474 (proton donor) is an active-site residue. N-linked (GlcNAc...) asparagine glycans are attached at residues asparagine 532, asparagine 603, asparagine 626, asparagine 653, asparagine 733, asparagine 756, asparagine 785, asparagine 793, asparagine 819, and asparagine 905.

This sequence belongs to the glycosyl hydrolase 2 family. Beta-mannosidase A subfamily. Homodimer.

It is found in the secreted. The catalysed reaction is Hydrolysis of terminal, non-reducing beta-D-mannose residues in beta-D-mannosides.. The protein operates within glycan metabolism; N-glycan degradation. Exoglycosidase that cleaves the single beta-linked mannose residue from the non-reducing end of beta-mannosidic oligosaccharides of various complexity and length. Involved in the degradation of polymeric mannan and galactomannan. In Aspergillus fumigatus (strain ATCC MYA-4609 / CBS 101355 / FGSC A1100 / Af293) (Neosartorya fumigata), this protein is Beta-mannosidase A (mndA).